Consider the following 312-residue polypeptide: Plasma membrane-associated coenzyme Q6 reductase PGA3 (312 aa).

Residues Met-1–Pro-15 lie on the Extracellular side of the membrane. A helical membrane pass occupies residues Val-16–Met-36. At Ser-37–Glu-39 the chain is on the cytoplasmic side. A helical membrane pass occupies residues Leu-40–Ala-60. At Tyr-61–His-179 the chain is on the extracellular side. One can recognise an FAD-binding FR-type domain in the interval Asp-70–Glu-173. FAD-binding positions include Ala-153–Gly-168 and His-179–Leu-211. The helical transmembrane segment at Leu-180–Ile-200 threads the bilayer. Residues Thr-201–Phe-312 lie on the Cytoplasmic side of the membrane.

The protein belongs to the flavoprotein pyridine nucleotide cytochrome reductase family. FAD is required as a cofactor.

It localises to the cell membrane. Its subcellular location is the endoplasmic reticulum membrane. The catalysed reaction is 2 Fe(III)-[cytochrome b5] + NADH = 2 Fe(II)-[cytochrome b5] + NAD(+) + H(+). Inhibited by diphenylene iodonium (DPI). NADH-dependent cytochrome b5 reductase that reduces coenzyme Q6 at the plasma membrane and mediates lifespan extension by calorie restriction by shifting fermentative to respiratory metabolism, probably through modulating the NAD(+)/NADH ratio. This Saccharomyces cerevisiae (strain ATCC 204508 / S288c) (Baker's yeast) protein is Plasma membrane-associated coenzyme Q6 reductase PGA3 (PGA3).